Here is a 159-residue protein sequence, read N- to C-terminus: MNIKIICVGKLKEKYFKQGIAEYAKRMSKFAKFQIVEVPDEKAPESLSNAEMENVKAKEGQRILEKIKDRDYVYALAILGKERSSEEFAAEIDKLTTYGHSDIDFVIGGSLGLSPEVLKRADTQISFGRFTLPHQLMRLVLSEQVYRAFMINVGSPYHK.

S-adenosyl-L-methionine contacts are provided by Leu-76 and Gly-108.

The protein belongs to the RNA methyltransferase RlmH family. Homodimer.

It is found in the cytoplasm. It catalyses the reaction pseudouridine(1915) in 23S rRNA + S-adenosyl-L-methionine = N(3)-methylpseudouridine(1915) in 23S rRNA + S-adenosyl-L-homocysteine + H(+). Functionally, specifically methylates the pseudouridine at position 1915 (m3Psi1915) in 23S rRNA. This is Ribosomal RNA large subunit methyltransferase H from Lactiplantibacillus plantarum (strain ATCC BAA-793 / NCIMB 8826 / WCFS1) (Lactobacillus plantarum).